The chain runs to 257 residues: Fructose-2,6-bisphosphatase TIGAR B (257 aa).

Catalysis depends on histidine 11, which acts as the Tele-phosphohistidine intermediate. Glutamate 89 functions as the Proton donor/acceptor in the catalytic mechanism.

It belongs to the phosphoglycerate mutase family.

The protein localises to the cytoplasm. It localises to the nucleus. It is found in the mitochondrion. It carries out the reaction beta-D-fructose 2,6-bisphosphate + H2O = beta-D-fructose 6-phosphate + phosphate. In terms of biological role, fructose-bisphosphatase hydrolyzing fructose-2,6-bisphosphate as well as fructose-1,6-bisphosphate. Acts as a negative regulator of glycolysis by lowering intracellular levels of fructose-2,6-bisphosphate in a p53/TP53-dependent manner, resulting in the pentose phosphate pathway (PPP) activation and NADPH production. Contributes to the generation of reduced glutathione to cause a decrease in intracellular reactive oxygen species (ROS) content, correlating with its ability to protect cells from oxidative or metabolic stress-induced cell death. May play a role in mitophagy inhibition. The protein is Fructose-2,6-bisphosphatase TIGAR B of Danio rerio (Zebrafish).